The sequence spans 622 residues: Lamin Dm0 (622 aa).

The segment at 1–50 (MSSKSRRAGTATPQPGNTSTPRPPSAGPQPPPPSTHSQTASSPLSPTRHS) is disordered. S2 bears the N-acetylserine mark. A head region spans residues 2–56 (SSKSRRAGTATPQPGNTSTPRPPSAGPQPPPPSTHSQTASSPLSPTRHSRVAEKV). Phosphothreonine occurs at positions 10, 12, and 20. Positions 21-34 (PRPPSAGPQPPPPS) are enriched in pro residues. Residues S25 and S34 each carry the phosphoserine modification. A Phosphothreonine modification is found at T39. 3 positions are modified to phosphoserine: S41, S42, and S45. At T47 the chain carries Phosphothreonine. The IF rod domain occupies 54–410 (EKVELQNLND…KLLVGEEARL (357 aa)). A coil 1A region spans residues 55–91 (KVELQNLNDRLATYIDRVRNLETENSRLTIEVQTTRD). The tract at residues 92-103 (TVTRETTNIKNI) is linker 1. Residues 104 to 241 (FEAELLETRR…QIHSQEINES (138 aa)) form a coil 1B region. S235 carries the phosphoserine modification. A linker 2 region spans residues 242-265 (RRIKQTEYSEIDGRLSSEYDAKLK). Y249 is subject to Phosphotyrosine. Phosphoserine occurs at positions 250 and 311. The tract at residues 266–408 (QSLQELRAQY…YDKLLVGEEA (143 aa)) is coil 2. The tract at residues 409–619 (RLNITPATNT…GDPQQSNEKC (211 aa)) is tail. Phosphothreonine occurs at positions 413 and 435. Residues 429–440 (RNSTRATPSRRT) are compositionally biased toward polar residues. The disordered stretch occupies residues 429-448 (RNSTRATPSRRTPSAAVKRK). Position 442 is a phosphoserine (S442). The Nuclear localization signal motif lies at 446–451 (KRKRAV). A phosphoserine mark is found at S455 and S459. In terms of domain architecture, LTD spans 461 to 588 (ADYYVSASAK…RIVSQHTSSS (128 aa)). S595 bears the Phosphoserine mark. A Phosphothreonine modification is found at T597. The tract at residues 603 to 622 (EQLYHQQGDPQQSNEKCAIM) is disordered. Residues 605 to 622 (LYHQQGDPQQSNEKCAIM) show a composition bias toward polar residues. S615 bears the Phosphoserine mark. Residue C619 is modified to Cysteine methyl ester. C619 is lipidated: S-farnesyl cysteine. The propeptide at 620-622 (AIM) is removed in mature form.

Belongs to the intermediate filament family. In terms of assembly, interacts directly with LBR. Interacts with MAN1. Interacts with Ote. Three forms of lamin have been identified in D.melanogaster, lamin Dm0 is rapidly processed to lamin Dm1 in the cytoplasm, Dm1 is then assembled in the nuclear envelope and is then phosphorylated, forming lamin Dm2. As to expression, constitutively expressed in all tissues (at protein level). Expressed in spermatocytes (at protein level).

Its subcellular location is the nucleus. It localises to the nucleus inner membrane. It is found in the nucleus envelope. The protein localises to the nucleus lamina. The protein resides in the cytoplasm. Its subcellular location is the cytoskeleton. It localises to the spindle pole. In terms of biological role, lamins are components of the nuclear lamina, a fibrous layer on the nucleoplasmic side of the inner nuclear membrane, which is thought to provide a framework for the nuclear envelope and may also interact with chromatin. May have a role in the localization of the LEM domain proteins Ote, bocks and MAN1 to the nuclear membrane. In spermatocytes, plays a role in maintaining type-A lamin LamC nuclear localization; regulates meiotic cytokinesis by maintaining the structure of the spindle envelope, and by contributing to the formation of the contractile ring and central spindle. Required for nuclear migration and to link the microtubule organizing center (MTOC) to the nucleus. In addition, is required for nuclear envelope localization of klar. This is Lamin Dm0 from Drosophila melanogaster (Fruit fly).